We begin with the raw amino-acid sequence, 213 residues long: Thymidylate kinase (213 aa).

Position 11–18 (11–18 (GPDGAGKT)) interacts with ATP.

The protein belongs to the thymidylate kinase family.

The enzyme catalyses dTMP + ATP = dTDP + ADP. Its function is as follows. Phosphorylation of dTMP to form dTDP in both de novo and salvage pathways of dTTP synthesis. The protein is Thymidylate kinase of Oenococcus oeni (strain ATCC BAA-331 / PSU-1).